The sequence spans 537 residues: Eukaryotic translation initiation factor 3 subunit L (537 aa).

Over residues 1–19 (MSRRVEFDLSTEDHSDRRR) the composition is skewed to basic and acidic residues. The interval 1–30 (MSRRVEFDLSTEDHSDRRRTNTFSSSADED) is disordered. Residues 299–487 (EATKMFVNCL…GPSSADDDEP (189 aa)) enclose the PCI domain.

This sequence belongs to the eIF-3 subunit L family. In terms of assembly, component of the eukaryotic translation initiation factor 3 (eIF-3) complex.

It localises to the cytoplasm. Component of the eukaryotic translation initiation factor 3 (eIF-3) complex, which is involved in protein synthesis of a specialized repertoire of mRNAs and, together with other initiation factors, stimulates binding of mRNA and methionyl-tRNAi to the 40S ribosome. The eIF-3 complex specifically targets and initiates translation of a subset of mRNAs involved in cell proliferation. The protein is Eukaryotic translation initiation factor 3 subunit L of Caenorhabditis elegans.